Consider the following 212-residue polypeptide: ER lumen protein-retaining receptor 2 (212 aa).

At 1-4 the chain is on the lumenal side; the sequence is MNIF. Residues 5–24 traverse the membrane as a helical segment; sequence RLTGDLSHLAAIVILLLKIW. The Cytoplasmic portion of the chain corresponds to 25 to 32; the sequence is KTRSCAGI. A helical membrane pass occupies residues 33 to 52; that stretch reads SGKSQLLFALVFTTRYLDLF. Residues 47 to 48 form an interaction with the K-D-E-L motif on target proteins region; that stretch reads RY. At 53 to 58 the chain is on the lumenal side; sequence TSFISL. The helical transmembrane segment at 59–79 threads the bilayer; sequence YNTSMKVIYLACSYATVYLIY. Topologically, residues 80–92 are cytoplasmic; it reads LKFKATYDGNHDT. Residues 93-110 form a helical membrane-spanning segment; that stretch reads FRVEFLVVPVGGLSFLVN. Over 111–116 the chain is Lumenal; sequence HDFSPL. Residues 117–135 form a helical membrane-spanning segment; the sequence is EILWTFSIYLESVAILPQL. Topologically, residues 136-149 are cytoplasmic; sequence FMISKTGEAETITT. Residues 150–168 form a helical membrane-spanning segment; it reads HYLFFLGLYRALYLVNWIW. The interval 159-169 is interaction with the K-D-E-L motif on target proteins; sequence RALYLVNWIWR. The Lumenal segment spans residues 169–178; the sequence is RFYFEGFFDL. A helical transmembrane segment spans residues 179-199; that stretch reads IAVVAGVVQTILYCDFFYLYI. Over 200–212 the chain is Cytoplasmic; sequence TKVLKGKKLSLPA. The interval 204–207 is important for recycling of cargo proteins with the sequence motif K-D-E-L from the Golgi to the endoplasmic reticulum; that stretch reads KGKK.

Belongs to the ERD2 family.

Its subcellular location is the endoplasmic reticulum membrane. It localises to the golgi apparatus membrane. The protein localises to the cytoplasmic vesicle. The protein resides in the COPI-coated vesicle membrane. Its function is as follows. Membrane receptor that binds the K-D-E-L sequence motif in the C-terminal part of endoplasmic reticulum resident proteins and maintains their localization in that compartment by participating to their vesicle-mediated recycling back from the Golgi. Binding is pH dependent, and is optimal at pH 5-5.4. This chain is ER lumen protein-retaining receptor 2 (KDELR2), found in Homo sapiens (Human).